Here is a 330-residue protein sequence, read N- to C-terminus: Beta-ketoacyl-[acyl-carrier-protein] synthase III (330 aa).

Residues cysteine 115 and histidine 255 contribute to the active site. The ACP-binding stretch occupies residues 256-260 (QANFR). The active site involves asparagine 285.

It belongs to the thiolase-like superfamily. FabH family. In terms of assembly, homodimer.

It localises to the cytoplasm. It catalyses the reaction malonyl-[ACP] + acetyl-CoA + H(+) = 3-oxobutanoyl-[ACP] + CO2 + CoA. The protein operates within lipid metabolism; fatty acid biosynthesis. Functionally, catalyzes the condensation reaction of fatty acid synthesis by the addition to an acyl acceptor of two carbons from malonyl-ACP. Catalyzes the first condensation reaction which initiates fatty acid synthesis and may therefore play a role in governing the total rate of fatty acid production. Possesses both acetoacetyl-ACP synthase and acetyl transacylase activities. Its substrate specificity determines the biosynthesis of branched-chain and/or straight-chain of fatty acids. The chain is Beta-ketoacyl-[acyl-carrier-protein] synthase III from Helicobacter pylori (strain HPAG1).